The sequence spans 1129 residues: Protein TPR1 (1129 aa).

Positions 4 to 36 constitute a LisH domain; sequence LSRELVFLILQFLDEEKFKETVHKLEQESGFFF. In terms of domain architecture, CTLH spans 34-92; it reads FFFNMKYFEEKVHAGEWDEVEKYLSGFTKVDDNRYSMKIFFEIRKQKYLEALDRHDRAK. WD repeat units lie at residues 337 to 377, 398 to 437, 443 to 485, 487 to 527, 579 to 618, 623 to 662, 762 to 801, 829 to 867, 870 to 910, 913 to 952, and 1005 to 1044; these read SQGS…RLFS, ESSISINRVTWSPDGDLIGVAFAKHLIHLHAYQQPNETRQ, AHSG…FSFE, HEAP…SRVD, KKSAGVGVVQFDTAQNHILAAGEDNQIKFWDVDNTTMLSS, GGLPGLPRLRFNKEGNLLAVTTVDNGFKILANADGLRTLR, DQASKVVRLLYTNSGVGLLALGSNAIQRLWKWARNDQNPS, NPEDAVPCIALSKNDSYVMSACGGKVSLFNMMTFKVMTT, PPPP…VKTR, GHQRRITGLAFSNNLQILVSSGADAQLCVWATDTWEKKKS, and ALSAPISHASYSRNSQLVFAAFTDGNIGIFDVENLRLRCR. The tract at residues 1092–1129 is disordered; sequence LESEGKWGTTPPTENGVPNGRTSTSSATSNPAADQIQR. A compositionally biased stretch (low complexity) spans 1113–1129; it reads TSTSSATSNPAADQIQR.

In terms of assembly, tetramer. Interacts with D53. Interacts with WOX1. Interacts with MOF1. In terms of tissue distribution, expressed in panicles, stems, leaves, spikelets and seed endosperm.

In terms of biological role, probable downstream regulator of strigolactones signaling. The protein is Protein TPR1 of Oryza sativa subsp. japonica (Rice).